A 295-amino-acid chain; its full sequence is Mitochondrial dicarboxylate transporter (295 aa).

3 Solcar repeats span residues 4 to 88 (KQVK…LKEH), 96 to 188 (TNMW…FKNF), and 198 to 286 (KKNS…LKKY). 6 helical membrane passes run 8 to 24 (YPWWYGGAAGIFAVMNT), 63 to 82 (GLSASLLRQCTYTTARFGMY), 98 to 122 (MWYLLGASMVSGALGGLAGNFADLI), 163 to 182 (GWKPNMVRGVLMTASQVVTY), 204 to 224 (LTSSLLAGFVATTVCSPADVI), and 262 to 280 (WVPSFTRLAPFTMLIFFAM).

The protein belongs to the mitochondrial carrier (TC 2.A.29) family. In terms of assembly, homodimer.

Its subcellular location is the mitochondrion inner membrane. In terms of biological role, mitochondrial dicarboxylic transporter catalyzing the exchange of dicarboxylic acids like malate and succinate for inorganic phosphate. Required for growth on ethanol and acetate. This chain is Mitochondrial dicarboxylate transporter (DIC1), found in Candida glabrata (strain ATCC 2001 / BCRC 20586 / JCM 3761 / NBRC 0622 / NRRL Y-65 / CBS 138) (Yeast).